The chain runs to 473 residues: UDP-N-acetylmuramate--L-alanine ligase (473 aa).

115–121 (GTHGKTT) is an ATP binding site.

This sequence belongs to the MurCDEF family.

The protein localises to the cytoplasm. It carries out the reaction UDP-N-acetyl-alpha-D-muramate + L-alanine + ATP = UDP-N-acetyl-alpha-D-muramoyl-L-alanine + ADP + phosphate + H(+). Its pathway is cell wall biogenesis; peptidoglycan biosynthesis. In terms of biological role, cell wall formation. The chain is UDP-N-acetylmuramate--L-alanine ligase from Rhizorhabdus wittichii (strain DSM 6014 / CCUG 31198 / JCM 15750 / NBRC 105917 / EY 4224 / RW1) (Sphingomonas wittichii).